Reading from the N-terminus, the 152-residue chain is Ribosome maturation factor RimP (152 aa).

This sequence belongs to the RimP family.

The protein resides in the cytoplasm. Its function is as follows. Required for maturation of 30S ribosomal subunits. This chain is Ribosome maturation factor RimP, found in Burkholderia orbicola (strain MC0-3).